The following is a 198-amino-acid chain: Large ribosomal subunit protein bL25 (198 aa).

It belongs to the bacterial ribosomal protein bL25 family. CTC subfamily. As to quaternary structure, part of the 50S ribosomal subunit; part of the 5S rRNA/L5/L18/L25 subcomplex. Contacts the 5S rRNA. Binds to the 5S rRNA independently of L5 and L18.

Its function is as follows. This is one of the proteins that binds to the 5S RNA in the ribosome where it forms part of the central protuberance. The polypeptide is Large ribosomal subunit protein bL25 (Bordetella avium (strain 197N)).